The following is a 283-amino-acid chain: MFRDVLKTLPQYLIPKHGITALAGYFADVKNPRLKNFLIRNFIRKFDVDMSEALIEDPKSYDCFNDFFIRHLKPECRPLSQSDVICPVDGCISEIGKIERGQLLQAKGKYYSVQELLACDGQLAEQFVQGQFATLYLSPKDYHRVHMPIDAELVSMTYIPGALFSVQPATTRVVPKLFARNERLAIFFKTKIGPMVMVMVGATIVGAIGTSWHGDVKRSKKLERFDYSEQFSDKIISQGSEMGYFKLGSTVVLLFANGEKIQWDKELLAGSKIQLGKPMAIIT.

Residues D89, H146, and S249 each act as charge relay system; for autoendoproteolytic cleavage activity in the active site. S249 serves as the catalytic Schiff-base intermediate with substrate; via pyruvic acid; for decarboxylase activity. S249 is modified (pyruvic acid (Ser); by autocatalysis).

It belongs to the phosphatidylserine decarboxylase family. PSD-B subfamily. Prokaryotic type I sub-subfamily. As to quaternary structure, heterodimer of a large membrane-associated beta subunit and a small pyruvoyl-containing alpha subunit. Requires pyruvate as cofactor. In terms of processing, is synthesized initially as an inactive proenzyme. Formation of the active enzyme involves a self-maturation process in which the active site pyruvoyl group is generated from an internal serine residue via an autocatalytic post-translational modification. Two non-identical subunits are generated from the proenzyme in this reaction, and the pyruvate is formed at the N-terminus of the alpha chain, which is derived from the carboxyl end of the proenzyme. The autoendoproteolytic cleavage occurs by a canonical serine protease mechanism, in which the side chain hydroxyl group of the serine supplies its oxygen atom to form the C-terminus of the beta chain, while the remainder of the serine residue undergoes an oxidative deamination to produce ammonia and the pyruvoyl prosthetic group on the alpha chain. During this reaction, the Ser that is part of the protease active site of the proenzyme becomes the pyruvoyl prosthetic group, which constitutes an essential element of the active site of the mature decarboxylase.

It is found in the cell membrane. It catalyses the reaction a 1,2-diacyl-sn-glycero-3-phospho-L-serine + H(+) = a 1,2-diacyl-sn-glycero-3-phosphoethanolamine + CO2. It functions in the pathway phospholipid metabolism; phosphatidylethanolamine biosynthesis; phosphatidylethanolamine from CDP-diacylglycerol: step 2/2. In terms of biological role, catalyzes the formation of phosphatidylethanolamine (PtdEtn) from phosphatidylserine (PtdSer). In Legionella pneumophila (strain Lens), this protein is Phosphatidylserine decarboxylase proenzyme.